A 249-amino-acid chain; its full sequence is 5'-nucleotidase SurE (249 aa).

A divalent metal cation contacts are provided by Asp8, Asp9, Ser39, and Asn91.

This sequence belongs to the SurE nucleotidase family. Requires a divalent metal cation as cofactor.

It is found in the cytoplasm. The catalysed reaction is a ribonucleoside 5'-phosphate + H2O = a ribonucleoside + phosphate. Nucleotidase that shows phosphatase activity on nucleoside 5'-monophosphates. In Pseudomonas syringae pv. syringae (strain B728a), this protein is 5'-nucleotidase SurE.